The primary structure comprises 231 residues: Ribosomal RNA small subunit methyltransferase G (231 aa).

S-adenosyl-L-methionine-binding positions include G75, F80, 126–127 (AE), and R142.

It belongs to the methyltransferase superfamily. RNA methyltransferase RsmG family.

The protein localises to the cytoplasm. Specifically methylates the N7 position of a guanine in 16S rRNA. In Mycoplasma capricolum subsp. capricolum (strain California kid / ATCC 27343 / NCTC 10154), this protein is Ribosomal RNA small subunit methyltransferase G.